Reading from the N-terminus, the 532-residue chain is Zinc finger protein 350 (532 aa).

The region spanning 8-79 (ITLEDVAVDF…EDGIHSGACS (72 aa)) is the KRAB domain. C2H2-type zinc fingers lie at residues 206–228 (HVCSECGKAFIKKSWLTDHQVMH), 234–256 (HRCSLCEKAFSRKFMLTEHQRTH), 262–284 (YECPECGKAFLKKSRLNIHQKTH), 290–312 (YICSECGKGFIQKGNLIVHQRIH), 318–340 (YICNECGKGFIQKTCLIAHQRFH), 346–368 (FVCSECGKSCSQKSGLIKHQRIH), 374–396 (FECSECGKAFSTKQKLIVHQRTH), and 402–424 (YGCNECGKAFAYMSCLVKHKRIH). A compositionally biased stretch (basic and acidic residues) spans 427-443 (EKQEAAKVENPPAERHS). Positions 427-465 (EKQEAAKVENPPAERHSSLHTSDVMQEKNSANGATTQVP) are disordered. Residues 445 to 465 (LHTSDVMQEKNSANGATTQVP) show a composition bias toward polar residues.

This sequence belongs to the krueppel C2H2-type zinc-finger protein family. Interacts with BRCA1. Interacts with RNF11. In terms of tissue distribution, widely expressed.

Its subcellular location is the nucleus. It localises to the nucleus matrix. Its function is as follows. Transcriptional repressor. Binds to a specific sequence, 5'-GGGxxxCAGxxxTTT-3', within GADD45 intron 3. The protein is Zinc finger protein 350 (ZNF350) of Homo sapiens (Human).